The chain runs to 375 residues: tRNA (guanine(26)-N(2))-dimethyltransferase (375 aa).

One can recognise a Trm1 methyltransferase domain in the interval 2–368; that stretch reads KYITEGNTKL…AKLIDIVEFI (367 aa). Arg35, Arg66, Asp89, Asp116, and Ala117 together coordinate S-adenosyl-L-methionine.

This sequence belongs to the class I-like SAM-binding methyltransferase superfamily. Trm1 family.

The catalysed reaction is guanosine(26) in tRNA + 2 S-adenosyl-L-methionine = N(2)-dimethylguanosine(26) in tRNA + 2 S-adenosyl-L-homocysteine + 2 H(+). In terms of biological role, dimethylates a single guanine residue at position 26 of a number of tRNAs using S-adenosyl-L-methionine as donor of the methyl groups. In Methanococcus aeolicus (strain ATCC BAA-1280 / DSM 17508 / OCM 812 / Nankai-3), this protein is tRNA (guanine(26)-N(2))-dimethyltransferase.